The following is a 99-amino-acid chain: U1-theraphotoxin-Lsp1b (99 aa).

The signal sequence occupies residues 1 to 23 (MRSLTLAALLLCSLLLVFHTSAA). Positions 24–50 (EELQAQEGHLMIPGDTDTALETVDDER) are excised as a propeptide. Disulfide bonds link Cys54/Cys67, Cys58/Cys91, Cys72/Cys74, and Cys85/Cys96.

It belongs to the neurotoxin 12 (Hwtx-2) family. 04 (lasiotoxin) subfamily. In terms of tissue distribution, expressed by the venom gland.

It is found in the secreted. Its function is as follows. Toxin that causes irreversible contractile paralysis into adult Aedes aegypti resulting in 100% mortality after 24 hours. This is U1-theraphotoxin-Lsp1b from Lasiodora sp. (strain IBSP 8539) (Brazilian salmon pink birdeater).